The sequence spans 659 residues: Threonine--tRNA ligase (659 aa).

The 62-residue stretch at 3–64 folds into the TGS domain; it reads EKIRITLIDN…LEDGRLEIIT (62 aa). The segment at 249–555 is catalytic; the sequence is DHRRLGQEMD…LIEHHAGRFP (307 aa). Positions 354, 405, and 532 each coordinate Zn(2+).

It belongs to the class-II aminoacyl-tRNA synthetase family. In terms of assembly, homodimer. The cofactor is Zn(2+).

The protein localises to the cytoplasm. The enzyme catalyses tRNA(Thr) + L-threonine + ATP = L-threonyl-tRNA(Thr) + AMP + diphosphate + H(+). Functionally, catalyzes the attachment of threonine to tRNA(Thr) in a two-step reaction: L-threonine is first activated by ATP to form Thr-AMP and then transferred to the acceptor end of tRNA(Thr). Also edits incorrectly charged L-seryl-tRNA(Thr). The polypeptide is Threonine--tRNA ligase (Zymomonas mobilis subsp. mobilis (strain ATCC 31821 / ZM4 / CP4)).